The sequence spans 165 residues: Small ribosomal subunit protein uS13 (165 aa).

Residues 139 to 165 form a disordered region; it reads GMTIGVARKKAAQPQSQQSSSQQQKSS. The segment covering 153-165 has biased composition (low complexity); the sequence is QSQQSSSQQQKSS.

This sequence belongs to the universal ribosomal protein uS13 family. As to quaternary structure, part of the 30S ribosomal subunit. Forms a loose heterodimer with protein S19. Forms two bridges to the 50S subunit in the 70S ribosome.

Functionally, located at the top of the head of the 30S subunit, it contacts several helices of the 16S rRNA. In the 70S ribosome it contacts the 23S rRNA (bridge B1a) and protein L5 of the 50S subunit (bridge B1b), connecting the 2 subunits; these bridges are implicated in subunit movement. In Saccharolobus solfataricus (strain ATCC 35092 / DSM 1617 / JCM 11322 / P2) (Sulfolobus solfataricus), this protein is Small ribosomal subunit protein uS13.